The primary structure comprises 241 residues: Ribonuclease PH (241 aa).

Phosphate contacts are provided by residues Arg-89 and 127-129 (GTR).

Belongs to the RNase PH family. Homohexameric ring arranged as a trimer of dimers.

It carries out the reaction tRNA(n+1) + phosphate = tRNA(n) + a ribonucleoside 5'-diphosphate. Its function is as follows. Phosphorolytic 3'-5' exoribonuclease that plays an important role in tRNA 3'-end maturation. Removes nucleotide residues following the 3'-CCA terminus of tRNAs; can also add nucleotides to the ends of RNA molecules by using nucleoside diphosphates as substrates, but this may not be physiologically important. Probably plays a role in initiation of 16S rRNA degradation (leading to ribosome degradation) during starvation. This Xylella fastidiosa (strain M23) protein is Ribonuclease PH.